Consider the following 174-residue polypeptide: ATP synthase subunit b 2 (174 aa).

The chain crosses the membrane as a helical span at residues 27-47 (IFWLIITLVAIYLILTKVALP).

The protein belongs to the ATPase B chain family. In terms of assembly, F-type ATPases have 2 components, F(1) - the catalytic core - and F(0) - the membrane proton channel. F(1) has five subunits: alpha(3), beta(3), gamma(1), delta(1), epsilon(1). F(0) has three main subunits: a(1), b(2) and c(10-14). The alpha and beta chains form an alternating ring which encloses part of the gamma chain. F(1) is attached to F(0) by a central stalk formed by the gamma and epsilon chains, while a peripheral stalk is formed by the delta and b chains.

The protein resides in the cell inner membrane. In terms of biological role, f(1)F(0) ATP synthase produces ATP from ADP in the presence of a proton or sodium gradient. F-type ATPases consist of two structural domains, F(1) containing the extramembraneous catalytic core and F(0) containing the membrane proton channel, linked together by a central stalk and a peripheral stalk. During catalysis, ATP synthesis in the catalytic domain of F(1) is coupled via a rotary mechanism of the central stalk subunits to proton translocation. Functionally, component of the F(0) channel, it forms part of the peripheral stalk, linking F(1) to F(0). The b'-subunit is a diverged and duplicated form of b found in plants and photosynthetic bacteria. This Dinoroseobacter shibae (strain DSM 16493 / NCIMB 14021 / DFL 12) protein is ATP synthase subunit b 2 (atpF2).